The following is a 578-amino-acid chain: Longifolene synthase (578 aa).

Mg(2+)-binding residues include aspartate 331, aspartate 335, and aspartate 475. The DDXXD motif signature appears at 331–335 (DDLYD).

Belongs to the terpene synthase family. Tpsd subfamily. Mg(2+) serves as cofactor. It depends on Mn(2+) as a cofactor.

It is found in the cytoplasm. The catalysed reaction is (2E,6E)-farnesyl diphosphate = longifolene + diphosphate. It participates in sesquiterpene biosynthesis. The protein operates within terpene metabolism; oleoresin biosynthesis. Functionally, involved in defensive oleoresin formation in conifers in response to insect attack or other injury. Involved in sesquiterpene (C15) olefins biosynthesis. Produces mainly longifolene, but also multiple minor products including alpha-longipinene, alpha-longicyclene, E-beta-farnesene, longiborneol, cyclosativene, beta-longipinene, and 12 other sesquiterpenes when used with farnesyl diphosphate (FPP) as substrate. This chain is Longifolene synthase (TPS-Lon), found in Picea abies (Norway spruce).